The primary structure comprises 899 residues: Putative lipoxygenase 5 (899 aa).

Disordered stretches follow at residues 15-34 (AGSR…RSTA), 48-68 (APVE…SVAA), and 258-291 (VASA…SAES). Positions 68–204 (ARAVVTVRRR…VSRDRRVFFS (137 aa)) constitute a PLAT domain. In terms of domain architecture, Lipoxygenase spans 207-899 (PYLPSETPPG…CRGVPNSVTI (693 aa)). His-559, His-564, His-751, Asn-755, and Ile-899 together coordinate Fe cation.

Belongs to the lipoxygenase family. Fe cation serves as cofactor.

It carries out the reaction (9Z,12Z)-octadecadienoate + O2 = (13S)-hydroperoxy-(9Z,11E)-octadecadienoate. The catalysed reaction is (9Z,12Z,15Z)-octadecatrienoate + O2 = (13S)-hydroperoxy-(9Z,11E,15Z)-octadecatrienoate. It functions in the pathway lipid metabolism; oxylipin biosynthesis. Plant lipoxygenase may be involved in a number of diverse aspects of plant physiology including growth and development, pest resistance, and senescence or responses to wounding. Catalyzes the hydroperoxidation of lipids containing a cis,cis-1,4-pentadiene structure. This Oryza sativa subsp. japonica (Rice) protein is Putative lipoxygenase 5.